The following is a 1726-amino-acid chain: Transcription elongation factor SPT6 (1726 aa).

Composition is skewed to acidic residues over residues 1 to 18 (MSDF…EFEE), 31 to 45 (EEDE…EDQD), and 55 to 79 (DDDD…SDSG). 3 disordered regions span residues 1-196 (MSDF…KGKK), 219-248 (AEFD…KKQT), and 482-512 (EVSE…QASR). Ser-90 is subject to Phosphoserine. Over residues 93-104 (DYLDDDDLDLIE) the composition is skewed to acidic residues. Basic residues predominate over residues 110-120 (KVKRRKKKYSR). 4 stretches are compositionally biased toward acidic residues: residues 146 to 157 (GDGEGEVEDGEA), 166 to 186 (DEEE…DDDG), 219 to 240 (AEFD…DDES), and 484 to 501 (SEED…EEEE). Basic and acidic residues predominate over residues 502–512 (QKGPDLKQASR). The stretch at 806-865 (LKRRNAWREDEREKKQQDVENLKKFLLSKKPHVVAVSGENRDAHMVMEDIKRTISELEQN) forms a coiled coil. The S1 motif domain occupies 1204–1273 (WNHFDSGSCP…EKFNVDLTCR (70 aa)). An SH2 domain is found at 1316-1426 (YIKRVIAHPS…LLGHKYFHEC (111 aa)). Thr-1522 is modified (phosphothreonine). Position 1525 is a phosphoserine (Ser-1525). The segment covering 1611–1627 (LMTPSYSYTTPGQQQAM) has biased composition (polar residues). The segment at 1611 to 1726 (LMTPSYSYTT…ATPLLDEMDR (116 aa)) is disordered. Composition is skewed to low complexity over residues 1628 to 1640 (TTPQ…PQSS) and 1647 to 1656 (SSSTPSSSSS). Positions 1657 to 1669 (RVRTPQPKASSHT) are enriched in polar residues.

This sequence belongs to the SPT6 family.

The protein localises to the nucleus. In terms of biological role, histone H3-H4 chaperone that plays a role in maintenance of chromatin structure during RNA polymerase II transcription elongation. Promotes the activation of the myogenic gene program by entailing erasure of the repressive H3K27me3 epigenetic mark through stabilization of the chromatin interaction of the H3K27 demethylase KDM6A. Plays an important role during early patterning and somitogenesis of the embryo. The sequence is that of Transcription elongation factor SPT6 (supt6h) from Danio rerio (Zebrafish).